The primary structure comprises 149 residues: Deoxyuridine 5'-triphosphate nucleotidohydrolase (149 aa).

Substrate is bound by residues 68–70, Asn-81, 85–87, and Lys-95; these read RSG and TVD.

Belongs to the dUTPase family. The cofactor is Mg(2+).

It carries out the reaction dUTP + H2O = dUMP + diphosphate + H(+). It participates in pyrimidine metabolism; dUMP biosynthesis; dUMP from dCTP (dUTP route): step 2/2. In terms of biological role, this enzyme is involved in nucleotide metabolism: it produces dUMP, the immediate precursor of thymidine nucleotides and it decreases the intracellular concentration of dUTP so that uracil cannot be incorporated into DNA. This is Deoxyuridine 5'-triphosphate nucleotidohydrolase from Neorickettsia sennetsu (strain ATCC VR-367 / Miyayama) (Ehrlichia sennetsu).